Here is a 178-residue protein sequence, read N- to C-terminus: Cytidylate kinase 2 (178 aa).

Residue glycine 7 to threonine 15 coordinates ATP.

It belongs to the cytidylate kinase family. Type 2 subfamily.

The protein resides in the cytoplasm. The catalysed reaction is CMP + ATP = CDP + ADP. The enzyme catalyses dCMP + ATP = dCDP + ADP. This is Cytidylate kinase 2 from Borreliella afzelii (strain PKo) (Borrelia afzelii).